The following is a 658-amino-acid chain: Phosphomethylpyrimidine synthase (658 aa).

Residues 1–22 (MNNSTDAVNPAKKPQTRREKRE) form a disordered region. Substrate contacts are provided by residues Asn-248, Met-277, Tyr-306, His-342, 362-364 (SRG), 403-406 (DGLR), and Glu-442. His-446 contacts Zn(2+). Residue Tyr-469 participates in substrate binding. His-510 lines the Zn(2+) pocket. Residues Cys-590, Cys-593, and Cys-598 each contribute to the [4Fe-4S] cluster site.

The protein belongs to the ThiC family. In terms of assembly, homodimer. The cofactor is [4Fe-4S] cluster.

The enzyme catalyses 5-amino-1-(5-phospho-beta-D-ribosyl)imidazole + S-adenosyl-L-methionine = 4-amino-2-methyl-5-(phosphooxymethyl)pyrimidine + CO + 5'-deoxyadenosine + formate + L-methionine + 3 H(+). It functions in the pathway cofactor biosynthesis; thiamine diphosphate biosynthesis. Functionally, catalyzes the synthesis of the hydroxymethylpyrimidine phosphate (HMP-P) moiety of thiamine from aminoimidazole ribotide (AIR) in a radical S-adenosyl-L-methionine (SAM)-dependent reaction. The protein is Phosphomethylpyrimidine synthase of Colwellia psychrerythraea (strain 34H / ATCC BAA-681) (Vibrio psychroerythus).